We begin with the raw amino-acid sequence, 30 residues long: Phospholemman-like protein (30 aa).

The protein belongs to the FXYD family. In terms of processing, phosphorylated by protein kinase a (PK-A) and protein kinase C (PK-C). Phosphorylated in response to insulin and adrenergic stimulation.

It localises to the microsome membrane. The protein resides in the endoplasmic reticulum membrane. Induces a hyperpolarization-activated chloride current when expressed in Xenopus oocytes. May have a functional role in muscle contraction. In Squalus acanthias (Spiny dogfish), this protein is Phospholemman-like protein.